We begin with the raw amino-acid sequence, 347 residues long: Coproporphyrinogen-III oxidase, aerobic 2 (347 aa).

Residues 1–31 form a disordered region; the sequence is MGRHSDNSLQESANHTVLLTSPTNTIPKDSR. The segment covering 7 to 31 has biased composition (polar residues); the sequence is NSLQESANHTVLLTSPTNTIPKDSR. An important for dimerization region spans residues 75–84; sequence VIREGRVFEQ. Serine 119 is a substrate binding site. Histidine 133 acts as the Proton donor in catalysis. Substrate-binding positions include 135 to 137 and 305 to 310; these read NYR and KGRTES. The important for dimerization stretch occupies residues 287-322; it reads YVEFNLVYDRGTVFGLQTKGRTESILMSLPPLARWE.

This sequence belongs to the aerobic coproporphyrinogen-III oxidase family. Homodimer.

It is found in the cytoplasm. It catalyses the reaction coproporphyrinogen III + O2 + 2 H(+) = protoporphyrinogen IX + 2 CO2 + 2 H2O. It functions in the pathway porphyrin-containing compound metabolism; protoporphyrin-IX biosynthesis; protoporphyrinogen-IX from coproporphyrinogen-III (O2 route): step 1/1. Key enzyme in heme biosynthesis. Catalyzes the oxidative decarboxylation of propionic acid side chains of rings A and B of coproporphyrinogen III. This is Coproporphyrinogen-III oxidase, aerobic 2 from Nostoc sp. (strain PCC 7120 / SAG 25.82 / UTEX 2576).